The primary structure comprises 405 residues: Histidine decarboxylase (405 aa).

H121 is a substrate binding site. At K234 the chain carries N6-(pyridoxal phosphate)lysine.

The protein belongs to the group II decarboxylase family. Homotetramer. Pyridoxal 5'-phosphate serves as cofactor.

The catalysed reaction is L-histidine + H(+) = histamine + CO2. Its pathway is siderophore biosynthesis; pseudomonine biosynthesis. The protein is Histidine decarboxylase of Pseudomonas fluorescens.